Consider the following 705-residue polypeptide: MSSDTSQAVITTPPPPSMPHKERYFDRINESDPEYLRERNMSPDLRQDFNMMEQRKRVTQILQSPAFREDLECLIQEQMKKGHDPTGLLALQQIADYIMANSFTGFSSPPLSLGMVTPINDLPGADTSSYVKGEKLTRCKLASLYRLADLFGWAHLANTYISVRVSKEQDHIIIIPRGLSFSEATASALVKVNIIGEVVDQGSTNLKIDHSGFSPHAAIYSTRPDVKCVIHIHTLATAAVSSMKCGILPISQESLILGDVAYYDYQGSLDEEEERIELQKVLGPSCKVLVLRNHGVVALGETLEEAFHYIFNVQMACEIQVQAVAGAGGVDNLLILDLQKYKAFTHGVAMTGGGGVNMGSHQKWKVGEIEFEGLMRTLDNLGYRTGYAYRHPLVREKPRHKSDVEIPATVTAFSFEDDSVPLSPLKYMAQRQQREKTRWLNSPNTYMKVNVPEESRNGETSPRTKITWMKAEDPSKVSSGTPIKIEDPNQFVPLNTNPTEVLEKRNKIREQNRYDLKTAGPQSQLLAGIVVDKPPSTMRFEDDDQGPPAPPNPFSHLMEGELEEYTKTIERKQQGLDDAEQESLSDDAASVSQIQSQTQSPQSVPERLEENHELFSKSFTSVDVPVIVNGKDEMHDVEDELAQRVSRLTTSTTIENIEITIKSPDRTEEVLSPDGSPSKSPSKKKKKFRTPSFLKKNKKKEKVEA.

A compositionally biased stretch (polar residues) spans 1 to 10; that stretch reads MSSDTSQAVI. Residues 1-22 form a disordered region; sequence MSSDTSQAVITTPPPPSMPHKE. At S2 the chain carries N-acetylserine. Phosphoserine is present on residues S31, S42, S64, S402, S414, S423, S442, and S461. Disordered stretches follow at residues 472-495, 535-556, 572-612, and 658-705; these read EDPSKVSSGTPIKIEDPNQFVPLN, PSTMRFEDDDQGPPAPPNPFSH, KQQG…EENH, and EITI…KVEA. K484 participates in a covalent cross-link: Glycyl lysine isopeptide (Lys-Gly) (interchain with G-Cter in SUMO2). S583, S585, S590, S672, S676, S678, and S680 each carry phosphoserine. The segment covering 590–605 has biased composition (low complexity); the sequence is SVSQIQSQTQSPQSVP. Over residues 681–705 the composition is skewed to basic residues; sequence PSKKKKKFRTPSFLKKNKKKEKVEA. Position 682 is a phosphoserine; by PKC (S682). The interaction with calmodulin stretch occupies residues 683-700; that stretch reads KKKKKFRTPSFLKKNKKK.

Belongs to the aldolase class II family. Adducin subfamily. Heterodimer of an alpha and a gamma subunit. Post-translationally, sumoylated. In terms of processing, proteolytically cleaved by asparagine endopeptidase (AEP) into 2 fragments. Overexpression of the 1-357 fragment induces neuronal apoptosis, and overexpression of either 1-357 or 358-706 fragment increases the degeneration of dendritic spines. Overexpression of the 1-357 fragment impairs neurite outgrowth by downregulating the expression of Rac2, and induces synaptic dysfunction and cognitive impairments in tau P301S transgenic mice, a mouse model for Alzheimer disease (AD). As to expression, expressed in kidney, brain, spleen, liver and heart. In terms of tissue distribution, expressed in renal interlobular arteries, afferent/efferent arterioles, parietal glomerular epithelial cells and microvilli of the luminal surface of the proximal tubule (at protein level). Expressed in podocytes (at protein level) Expressed in renal cortex (at protein level). Expressed in primary vascular smooth muscle cells (VSMCs) of the kidney (at protein level). Expressed in tubular cells and glomeruli (at protein level).

It localises to the cytoplasm. Its subcellular location is the cytoskeleton. The protein localises to the cell membrane. Functionally, membrane-cytoskeleton-associated protein that promotes the assembly of the spectrin-actin network. Plays a role in actin filament capping. Binds to calmodulin. Involved in myogenic reactivity of the renal afferent arteriole (Af-art), renal interlobular arteries and middle cerebral artery (MCA) to increased perfusion pressure. Involved in regulation of potassium channels in the vascular smooth muscle cells (VSMCs) of the Af-art and MCA ex vivo. Involved in regulation of glomerular capillary pressure, glomerular filtration rate (GFR) and glomerular nephrin expression in response to hypertension. Involved in renal blood flow (RBF) autoregulation. Plays a role in podocyte structure and function. Regulates globular monomer actin (G-actin) and filamentous polymer actin (F-actin) ratios in the primary podocytes affecting actin cytoskeleton organization. Regulates expression of synaptopodin, RhoA, Rac1 and CDC42 in the renal cortex and the primary podocytes. Regulates expression of nephrin in the glomeruli and in the primary podocytes, expression of nephrin and podocinin in the renal cortex, and expression of focal adhesion proteins integrin alpha-3 and integrin beta-1 in the glomeruli. Involved in cell migration and cell adhesion of podocytes, and in podocyte foot process effacement. Regulates expression of profibrotics markers MMP2, MMP9, TGF beta-1, tubular tight junction protein E-cadherin, and mesenchymal markers vimentin and alpha-SMA. Promotes the growth of neurites. This is Gamma-adducin (Add3) from Rattus norvegicus (Rat).